A 338-amino-acid chain; its full sequence is Ketol-acid reductoisomerase (NADP(+)) (338 aa).

The KARI N-terminal Rossmann domain maps to 1-181; that stretch reads MKVFYDKDCD…GGGKAGIIET (181 aa). NADP(+) is bound by residues 24-27, R47, and S52; that span reads YGSQ. Residue H107 is part of the active site. G133 provides a ligand contact to NADP(+). In terms of domain architecture, KARI C-terminal knotted spans 182–327; it reads TFREETETDL…EKLRAMMPWI (146 aa). Residues D190, E194, E226, and E230 each coordinate Mg(2+). Position 251 (S251) interacts with substrate.

This sequence belongs to the ketol-acid reductoisomerase family. Requires Mg(2+) as cofactor.

The catalysed reaction is (2R)-2,3-dihydroxy-3-methylbutanoate + NADP(+) = (2S)-2-acetolactate + NADPH + H(+). It catalyses the reaction (2R,3R)-2,3-dihydroxy-3-methylpentanoate + NADP(+) = (S)-2-ethyl-2-hydroxy-3-oxobutanoate + NADPH + H(+). It participates in amino-acid biosynthesis; L-isoleucine biosynthesis; L-isoleucine from 2-oxobutanoate: step 2/4. Its pathway is amino-acid biosynthesis; L-valine biosynthesis; L-valine from pyruvate: step 2/4. Its function is as follows. Involved in the biosynthesis of branched-chain amino acids (BCAA). Catalyzes an alkyl-migration followed by a ketol-acid reduction of (S)-2-acetolactate (S2AL) to yield (R)-2,3-dihydroxy-isovalerate. In the isomerase reaction, S2AL is rearranged via a Mg-dependent methyl migration to produce 3-hydroxy-3-methyl-2-ketobutyrate (HMKB). In the reductase reaction, this 2-ketoacid undergoes a metal-dependent reduction by NADPH to yield (R)-2,3-dihydroxy-isovalerate. This Albidiferax ferrireducens (strain ATCC BAA-621 / DSM 15236 / T118) (Rhodoferax ferrireducens) protein is Ketol-acid reductoisomerase (NADP(+)).